Consider the following 328-residue polypeptide: Ferredoxin--NADP reductase (328 aa).

FAD contacts are provided by S14, E33, Q41, Y46, I90, and F126.

It belongs to the ferredoxin--NADP reductase type 2 family. In terms of assembly, homodimer. Requires FAD as cofactor.

The enzyme catalyses 2 reduced [2Fe-2S]-[ferredoxin] + NADP(+) + H(+) = 2 oxidized [2Fe-2S]-[ferredoxin] + NADPH. The chain is Ferredoxin--NADP reductase from Mycoplasmoides gallisepticum (strain R(low / passage 15 / clone 2)) (Mycoplasma gallisepticum).